A 398-amino-acid polypeptide reads, in one-letter code: Neuroplastin (398 aa).

An N-terminal signal peptide occupies residues 1 to 28; it reads MSGSSLPSALALSLLLVSGSLLPGPGAA. Ig-like domains are found at residues 29–134, 148–235, and 238–329; these read QNAG…PSIT, PRIV…IEVK, and PDIT…SVVT. The Extracellular portion of the chain corresponds to 29-339; it reads QNAGFVKSPM…VLRVRSHLAP (311 aa). Cysteines 52 and 116 form a disulfide. The segment at 149-161 is narpin; mediates binding with FGFR1 and has antidepressant-like activity; it reads RIVTSEEVIIRDS. Residues cysteine 170 and cysteine 218 are joined by a disulfide bond. Asparagine 171, asparagine 197, asparagine 229, asparagine 284, asparagine 296, and asparagine 317 each carry an N-linked (GlcNAc...) asparagine glycan. Residues cysteine 259 and cysteine 316 are joined by a disulfide bond. Residues 340–360 form a helical membrane-spanning segment; it reads LWPFLGILAEIIILVVIIVVY. Residues 361–398 lie on the Cytoplasmic side of the membrane; the sequence is EKRKRPDEVPDDDEPAGPMKTNSTNNHKDKNLRQRNTN. The disordered stretch occupies residues 365–398; the sequence is RPDEVPDDDEPAGPMKTNSTNNHKDKNLRQRNTN.

As to quaternary structure, interacts with ATP2B1; this interaction stabilizes ATP2B1 and increases ATPase activity; this interaction controls T cell calcium homeostasis following T cell activation. Interacts with XKR8; promoting its localization at the cell membrane. As to expression, isoform 1 is ubiquitously expressed. Isoform 2 is expressed in brain cortex and cerebellum (at protein level).

It localises to the cell membrane. It is found in the postsynaptic density. Its function is as follows. Probable homophilic and heterophilic cell adhesion molecule involved in long term potentiation at hippocampal excitatory synapses through activation of p38MAPK. May also regulate neurite outgrowth by activating the FGFR1 signaling pathway. May play a role in synaptic plasticity. Also acts as a chaperone for ATP2B1; stabilizes ATP2B1 and increases its ATPase activity. Promotes localization of XKR8 at the cell membrane. The sequence is that of Neuroplastin (NPTN) from Homo sapiens (Human).